The chain runs to 977 residues: MKPKSVSEIREIFLNYFKDKSHNVVPSSSLLPAGDPTLLFTTAGMVQFKPLFTGAVELPYTRATSCQKCLRTTDLEVVGKTERHCTFFEMLGNFSFGDYFKEEAIEYALDCSVNHFGFDKNKIWVTVYTDDDEAEKIWLSKGIPKERITRLGKKDNFWGPAGDSGACGPCSELYLDRGIEKGGPNCATSGTCKPGCDCDRFLEFWNIVFNQFNQDTEGNLHPLKQTGIDTGSGLERVALLLQEVDSVYDTNELRKIISFYEELSGISYEDKTLSEISEKKNNNQQISSQVRNETKSIQDSRKTAFRVVTDHIRSVLFSIGDGIYPDRTGRGYVIRRLIRRATLFGRKLNFKEPFLYKLVDKVIEIYKARYPELQRNAAAITKTILVEEELFLKTLELGLEKIESLVQKTKAGGKTIFSGADAFLLYGTYGFPAEMTEEIVAEQGLDFDKKGFQEELEKDRQFSRESWKVNKVSLMTGLNVDKTEFLGYSSVSGKGNITHLFYNSPKSSNSLSQVDSKLQSSTPAGTGSYDSKQVSSLKEGQAGAIVLNKTPFYPEGGGQVGDIGFLRQGKNVFKVFDTQKENDSIIHFGEVLSGEFIVSQELEAEVEITRRERLKFHHSGTHLLNGALRTLLGDHVLQKGSIVSPEYLRFDFSHPSSLTSEEIRQIESWVNESIRKNFPVETKELSIEDAKKTGAVATFGEKYGERVRVVQMGDASIEFCGGTHVSRTGEIGYFFIKKESSPGAGNRRIEGVCGPAVIETFQNRFSELTESVQNLNLKIKSELGEEGTKILILSFIPGPDEIREKLEKEGASAVSFFRDLSENIATKIEENTSSFLKIKKNLAERDFENNTSVIENVLASSVDTGIGKIVSAIFEDKDPNSLKGLSDNLKVREKNLLVILGSRNSENASIVITCSSELTLKGIHCGNLIKTACELLGGKGGGRPDMAQGGGKEKQNLESAIAGVINEAKQILTGERV.

The segment at 512–535 (SQVDSKLQSSTPAGTGSYDSKQVS) is disordered. Zn(2+)-binding residues include His618, His622, Cys720, and His724.

Belongs to the class-II aminoacyl-tRNA synthetase family. Requires Zn(2+) as cofactor.

Its subcellular location is the cytoplasm. It carries out the reaction tRNA(Ala) + L-alanine + ATP = L-alanyl-tRNA(Ala) + AMP + diphosphate. In terms of biological role, catalyzes the attachment of alanine to tRNA(Ala) in a two-step reaction: alanine is first activated by ATP to form Ala-AMP and then transferred to the acceptor end of tRNA(Ala). Also edits incorrectly charged Ser-tRNA(Ala) and Gly-tRNA(Ala) via its editing domain. The chain is Alanine--tRNA ligase from Leptospira interrogans serogroup Icterohaemorrhagiae serovar Lai (strain 56601).